A 78-amino-acid chain; its full sequence is Acyl carrier protein (78 aa).

Positions 2–77 (STIEERVKKI…AAIDFINANQ (76 aa)) constitute a Carrier domain. Ser-37 is modified (O-(pantetheine 4'-phosphoryl)serine).

The protein belongs to the acyl carrier protein (ACP) family. Post-translationally, 4'-phosphopantetheine is transferred from CoA to a specific serine of apo-ACP by AcpS. This modification is essential for activity because fatty acids are bound in thioester linkage to the sulfhydryl of the prosthetic group.

The protein localises to the cytoplasm. The protein operates within lipid metabolism; fatty acid biosynthesis. Its function is as follows. Carrier of the growing fatty acid chain in fatty acid biosynthesis. The polypeptide is Acyl carrier protein (Yersinia pseudotuberculosis serotype O:1b (strain IP 31758)).